Reading from the N-terminus, the 338-residue chain is Phosphatidylglycerol--prolipoprotein diacylglyceryl transferase (338 aa).

4 helical membrane passes run 24–44 (WYGL…SYQV), 67–87 (LFIW…TLVY), 115–135 (GFQG…VILW), and 141–161 (FKFA…YTFG). Arg-162 contributes to the a 1,2-diacyl-sn-glycero-3-phospho-(1'-sn-glycerol) binding site. Helical transmembrane passes span 224–244 (PSQL…LWLL), 252–272 (GFLV…IEYF), and 304–324 (GQIL…ILYL).

The protein belongs to the Lgt family.

It localises to the cell inner membrane. It catalyses the reaction L-cysteinyl-[prolipoprotein] + a 1,2-diacyl-sn-glycero-3-phospho-(1'-sn-glycerol) = an S-1,2-diacyl-sn-glyceryl-L-cysteinyl-[prolipoprotein] + sn-glycerol 1-phosphate + H(+). Its pathway is protein modification; lipoprotein biosynthesis (diacylglyceryl transfer). In terms of biological role, catalyzes the transfer of the diacylglyceryl group from phosphatidylglycerol to the sulfhydryl group of the N-terminal cysteine of a prolipoprotein, the first step in the formation of mature lipoproteins. The polypeptide is Phosphatidylglycerol--prolipoprotein diacylglyceryl transferase (Treponema denticola (strain ATCC 35405 / DSM 14222 / CIP 103919 / JCM 8153 / KCTC 15104)).